A 386-amino-acid chain; its full sequence is Chaperone protein DnaJ (386 aa).

Residues 3 to 68 (DYYEILEVAR…KKRQVYDRYG (66 aa)) form the J domain. The segment at 146 to 224 (GVDKELVISN…CKGQGAVKEK (79 aa)) adopts a CR-type zinc-finger fold. Positions 159, 162, 176, 179, 198, 201, 212, and 215 each coordinate Zn(2+). 4 CXXCXGXG motif repeats span residues 159 to 166 (CNVCNGKG), 176 to 183 (CSECKGRG), 198 to 205 (CPKCHGEG), and 212 to 219 (CKNCKGQG).

This sequence belongs to the DnaJ family. In terms of assembly, homodimer. Zn(2+) serves as cofactor.

Its subcellular location is the cytoplasm. Its function is as follows. Participates actively in the response to hyperosmotic and heat shock by preventing the aggregation of stress-denatured proteins and by disaggregating proteins, also in an autonomous, DnaK-independent fashion. Unfolded proteins bind initially to DnaJ; upon interaction with the DnaJ-bound protein, DnaK hydrolyzes its bound ATP, resulting in the formation of a stable complex. GrpE releases ADP from DnaK; ATP binding to DnaK triggers the release of the substrate protein, thus completing the reaction cycle. Several rounds of ATP-dependent interactions between DnaJ, DnaK and GrpE are required for fully efficient folding. Also involved, together with DnaK and GrpE, in the DNA replication of plasmids through activation of initiation proteins. The protein is Chaperone protein DnaJ of Protochlamydia amoebophila (strain UWE25).